The following is a 429-amino-acid chain: Z-DNA-binding protein 1 (429 aa).

Z-binding domains are found at residues 8–70 (PGRE…CLGG) and 103–166 (PQFS…TIYR). A disordered region spans residues 68–107 (LGGTDPEGEGPAELALSSPAERPQQHAATIPETPGPQFSQ). Short sequence motifs (RIP homotypic interaction motif (RHIM)) lie at residues 195-219 (NSWI…RQTV) and 253-277 (DIHM…LHGV). 2 disordered regions span residues 277 to 299 (VPSE…AAGP) and 339 to 429 (KMSI…GGGI). Residues 347–358 (AGPGGVAGSGEG) show a composition bias toward gly residues. The span at 407 to 420 (KAAEGSHYVDEASH) shows a compositional bias: basic and acidic residues.

As to quaternary structure, homodimer. Interacts (via RIP homotypic interaction motif) with RIPK3; leading to RIPK3 activation and necroptosis; interaction is enhanced by CASP6. Interacts (via RIP homotypic interaction motif) with RIPK1. Component of the AIM2 PANoptosome complex, a multiprotein complex that drives inflammatory cell death (PANoptosis). (Microbial infection) Interacts (via RIP homotypic interaction motif/RHIM) with herpes simplex virus 1/HHV-1 protein RIR1/ICP6 (via RHIM); this interaction may induce heteromeric amyloid assemblies and prevent necroptosis activation. Interacts with human herpes simplex virus 1/HHV-1 protein ICP0. Phosphorylated. In terms of tissue distribution, highly expressed in lymphatic tissues including lymph node, leukocytes, tonsil, bone marrow and spleen. Expressed to a lesser extent in thymus, lung and liver.

It is found in the cytoplasm. The protein resides in the nucleus. With respect to regulation, ZBP1-dependent necroptosis is normally inhibited by RIPK1: RIPK1 inhibits the ZBP1-induced activation of RIPK3 via FADD-mediated recruitment of CASP8, which cleaves RIPK1 and limits TNF-induced necroptosis. Key innate sensor that recognizes and binds Z-RNA structures, which are produced by a number of viruses, such as herpesvirus, orthomyxovirus or flavivirus, and triggers different forms of cell death. ZBP1 acts as an essential mediator of pyroptosis, necroptosis and apoptosis (PANoptosis), an integral part of host defense against pathogens, by activating RIPK3, caspase-8 (CASP8), and the NLRP3 inflammasome. Key activator of necroptosis, a programmed cell death process in response to death-inducing TNF-alpha family members, via its ability to bind Z-RNA: once activated upon Z-RNA-binding, ZBP1 interacts and stimulates RIPK3 kinase, which phosphorylates and activates MLKL, triggering execution of programmed necrosis. In addition to TNF-induced necroptosis, necroptosis can also take place in the nucleus in response to orthomyxoviruses infection: ZBP1 recognizes and binds Z-RNA structures that are produced in infected nuclei by orthomyxoviruses, such as the influenza A virus (IAV), leading to ZBP1 activation, RIPK3 stimulation and subsequent MLKL phosphorylation, triggering disruption of the nuclear envelope and leakage of cellular DNA into the cytosol. ZBP1-dependent cell death in response to IAV infection promotes interleukin-1 alpha (IL1A) induction in an NLRP3-inflammasome-independent manner: IL1A expression is required for the optimal interleukin-1 beta (IL1B) production, and together, these cytokines promote infiltration of inflammatory neutrophils to the lung, leading to the formation of neutrophil extracellular traps. In addition to its direct role in driving necroptosis via its ability to sense Z-RNAs, also involved in PANoptosis triggered in response to bacterial infection: component of the AIM2 PANoptosome complex, a multiprotein complex that triggers PANoptosis. Also acts as the apical sensor of fungal infection responsible for activating PANoptosis. Involved in CASP8-mediated cell death via its interaction with RIPK1 but independently of its ability to sense Z-RNAs. In some cell types, also able to restrict viral replication by promoting cell death-independent responses. In response to Zika virus infection in neurons, promotes a cell death-independent pathway that restricts viral replication: together with RIPK3, promotes a death-independent transcriptional program that modifies the cellular metabolism via up-regulation expression of the enzyme ACOD1/IRG1 and production of the metabolite itaconate. Itaconate inhibits the activity of succinate dehydrogenase, generating a metabolic state in neurons that suppresses replication of viral genomes. Its function is as follows. (Microbial infection) In case of herpes simplex virus 1/HHV-1 infection, forms hetero-amyloid structures with HHV-1 protein RIR1/ICP6 which may inhibit ZBP1-mediated necroptosis, thereby preventing host cell death pathway and allowing viral evasion. The protein is Z-DNA-binding protein 1 of Homo sapiens (Human).